The chain runs to 479 residues: Anaerobic nitric oxide reductase flavorubredoxin (479 aa).

Residues 30 to 210 form a zinc metallo-hydrolase region; sequence LRGSSYNSYL…PFSRLVTPKI (181 aa). Residues histidine 79, glutamate 81, aspartate 83, histidine 147, aspartate 166, and histidine 227 each contribute to the Fe cation site. A Flavodoxin-like domain is found at 254 to 393; it reads ITIVYDTMSN…LCREHGREIA (140 aa). Residues 260 to 264 and 342 to 369 contribute to the FMN site; these read TMSNN and AFGS…EMSL. The Rubredoxin-like domain maps to 423 to 474; the sequence is GPRMQCSVCQWIYDPAKGEPMQDVAPGTPWSEVPDNFLCPECSLGKDVFDEL. Residues cysteine 428, cysteine 431, cysteine 461, and cysteine 464 each coordinate Fe cation.

The protein in the N-terminal section; belongs to the zinc metallo-hydrolase group 3 family. Homotetramer. Fe cation is required as a cofactor. It depends on FMN as a cofactor.

Its subcellular location is the cytoplasm. Its pathway is nitrogen metabolism; nitric oxide reduction. In terms of biological role, anaerobic nitric oxide reductase; uses NADH to detoxify nitric oxide (NO), protecting several 4Fe-4S NO-sensitive enzymes. Has at least 2 reductase partners, only one of which (NorW, flavorubredoxin reductase) has been identified. NO probably binds to the di-iron center; electrons enter from the NorW at rubredoxin and are transferred sequentially to the FMN center and the di-iron center. Also able to function as an aerobic oxygen reductase. This chain is Anaerobic nitric oxide reductase flavorubredoxin, found in Escherichia coli (strain UTI89 / UPEC).